The chain runs to 760 residues: Rho GTPase-activating protein 26 (760 aa).

A BAR domain is found at 7 to 262 (EFSECCLDSP…MKENPHEHKN (256 aa)). The PH domain occupies 265-369 (PYTMEGYLYV…WMEAMDGREP (105 aa)). A Rho-GAP domain is found at 383 to 568 (AQLDSIGFSI…ILIENHEKIF (186 aa)). Disordered stretches follow at residues 571–617 (VPET…ESRN) and 658–701 (PNRP…SPIS). Residues 605 to 617 (HTAQPNEKQESRN) show a composition bias toward polar residues. Residues 674-701 (LSPSWPMFSAPSSPMPTSSTSSDSSPIS) are compositionally biased toward low complexity. The SH3 domain maps to 702–760 (SPLRKARALYACKAEHDSELSFTAGTVFDNVHPSQEPGWLEGTLNGKTGLIPENYVEFL).

Binds to the C-terminus of PTK2/FAK1. As to expression, detected in embryonic brain and liver, and at low levels in embryonic eye, heart, lung, intestine and skeletal muscle.

It is found in the cell junction. The protein localises to the focal adhesion. The protein resides in the cytoplasm. It localises to the cytoskeleton. Its subcellular location is the endosome membrane. In terms of biological role, GTPase-activating protein for RHOA and CDC42. May be involved in the regulation of neosynthesized protein export through a Rab-endososomal dependent export route. The chain is Rho GTPase-activating protein 26 (ARHGAP26) from Gallus gallus (Chicken).